Reading from the N-terminus, the 322-residue chain is uncharacterized protein (322 aa).

Belongs to the glycosyltransferase 2 family.

This is an uncharacterized protein from Nostoc sp. (strain PCC 7120 / SAG 25.82 / UTEX 2576).